The primary structure comprises 424 residues: Adenylosuccinate synthetase (424 aa).

GTP-binding positions include 12–18 (GDEGKGK) and 40–42 (GHT). Aspartate 13 functions as the Proton acceptor in the catalytic mechanism. Residues aspartate 13 and glycine 40 each coordinate Mg(2+). Residues 13 to 16 (DEGK), 38 to 41 (NAGH), threonine 130, arginine 144, asparagine 220, threonine 235, and arginine 299 contribute to the IMP site. The active-site Proton donor is histidine 41. 295 to 301 (VTTGRRR) contributes to the substrate binding site. GTP contacts are provided by residues arginine 301, 327–329 (KLD), and 412–414 (GTG).

The protein belongs to the adenylosuccinate synthetase family. Homodimer. Requires Mg(2+) as cofactor.

It localises to the cytoplasm. It catalyses the reaction IMP + L-aspartate + GTP = N(6)-(1,2-dicarboxyethyl)-AMP + GDP + phosphate + 2 H(+). Its pathway is purine metabolism; AMP biosynthesis via de novo pathway; AMP from IMP: step 1/2. Functionally, plays an important role in the de novo pathway and in the salvage pathway of purine nucleotide biosynthesis. Catalyzes the first committed step in the biosynthesis of AMP from IMP. This Neosartorya fischeri (strain ATCC 1020 / DSM 3700 / CBS 544.65 / FGSC A1164 / JCM 1740 / NRRL 181 / WB 181) (Aspergillus fischerianus) protein is Adenylosuccinate synthetase.